Here is a 499-residue protein sequence, read N- to C-terminus: Guanosine-5'-triphosphate,3'-diphosphate pyrophosphatase (499 aa).

This sequence belongs to the GppA/Ppx family. GppA subfamily.

It carries out the reaction guanosine 3'-diphosphate 5'-triphosphate + H2O = guanosine 3',5'-bis(diphosphate) + phosphate + H(+). The protein operates within purine metabolism; ppGpp biosynthesis; ppGpp from GTP: step 2/2. In terms of biological role, catalyzes the conversion of pppGpp to ppGpp. Guanosine pentaphosphate (pppGpp) is a cytoplasmic signaling molecule which together with ppGpp controls the 'stringent response', an adaptive process that allows bacteria to respond to amino acid starvation, resulting in the coordinated regulation of numerous cellular activities. This is Guanosine-5'-triphosphate,3'-diphosphate pyrophosphatase from Klebsiella pneumoniae (strain 342).